The chain runs to 1019 residues: Photoactivated adenylate cyclase subunit alpha-like protein 1224-5/1F (1019 aa).

Positions 55-148 (LRRLMYLSAS…GRMYGWWHLK (94 aa)) constitute a BLUF 1 domain. In terms of domain architecture, Guanylate cyclase 1 spans 204 to 332 (VVTVIYLVEF…DWINSASRIT (129 aa)). The 93-residue stretch at 467–559 (LITLTYISQA…GVYGSPLDMT (93 aa)) folds into the BLUF 2 domain. The region spanning 615–744 (VMLATAISSF…EVRARVLEVE (130 aa)) is the Guanylate cyclase 2 domain. The disordered stretch occupies residues 825-863 (NISCRGGNPPAGGIPTSPKVRPPGRTNSVSSYTPDPKQA).

Belongs to the adenylyl cyclase class-4/guanylyl cyclase family. In terms of assembly, heterotetramer of two alpha and two beta subunits.

The protein localises to the cell projection. It is found in the cilium. The protein resides in the flagellum. This is Photoactivated adenylate cyclase subunit alpha-like protein 1224-5/1F from Euglena gracilis.